We begin with the raw amino-acid sequence, 263 residues long: Follistatin-related protein 3 (263 aa).

The signal sequence occupies residues methionine 1–serine 26. The TB domain maps to glycine 36–glycine 107. 13 disulfide bridges follow: cysteine 38–cysteine 61, cysteine 48–cysteine 92, cysteine 62–cysteine 95, cysteine 99–cysteine 110, cysteine 104–cysteine 119, cysteine 121–cysteine 153, cysteine 125–cysteine 146, cysteine 135–cysteine 167, cysteine 171–cysteine 182, cysteine 176–cysteine 192, cysteine 195–cysteine 229, cysteine 200–cysteine 222, and cysteine 211–cysteine 243. An N-linked (GlcNAc...) asparagine glycan is attached at asparagine 73. Residues cysteine 99 to cysteine 119 enclose the Follistatin-like 1 domain. Residues leucine 113 to lysine 169 enclose the Kazal-like 1 domain. Residues serine 170–valine 193 enclose the Follistatin-like 2 domain. The Kazal-like 2 domain occupies serine 189–glycine 245. A glycan (N-linked (GlcNAc...) asparagine) is linked at asparagine 215. The segment at serine 242–valine 263 is disordered. Serine 255 carries the post-translational modification Phosphoserine; by FAM20C.

Interacts with INHBA and INHBB. Interacts with FN1. Interacts with ADAM12. Isoform 2 interacts with MLLT10; the interaction enhances MLLT10 in vitro transcriptional activity and self-association. Interacts with MSTN. As to expression, expressed in a wide range of tissues.

The protein localises to the secreted. It localises to the nucleus. Its function is as follows. Isoform 1 or the secreted form is a binding and antagonizing protein for members of the TGF-beta family, such as activin, BMP2 and MSTN. Inhibits activin A-, activin B-, BMP2- and MSDT-induced cellular signaling; more effective on activin A than on activin B. Involved in bone formation; inhibits osteoclast differentiation. Involved in hematopoiesis; involved in differentiation of hemopoietic progenitor cells, increases hematopoietic cell adhesion to fibronectin and seems to contribute to the adhesion of hematopoietic precursor cells to the bone marrow stroma. Isoform 2 or the nuclear form is probably involved in transcriptional regulation via interaction with MLLT10. This Homo sapiens (Human) protein is Follistatin-related protein 3 (FSTL3).